A 355-amino-acid chain; its full sequence is RGG repeats nuclear RNA binding protein A (355 aa).

The residue at position 2 (Ala2) is an N-acetylalanine. Residues 26 to 225 (KIDKSKKSGQ…VEEKEPEDKE (200 aa)) form a disordered region. Low complexity predominate over residues 37–47 (SSLPAKSAPKL). Composition is skewed to gly residues over residues 67–81 (RGGG…GRGG) and 114–141 (GGGA…SNEG). Positions 132-139 (GRRGGFSN) match the Nuclear localization signal motif. Positions 143–168 (DGERPRRAFERRSGTGRGSDFKRDGS) are enriched in basic and acidic residues. The short motif at 145-155 (ERPRRAFERRS) is the Arginine-rich RNA-binding motif E-R-P-R-R-X-[F/Y]-[E/D]-R-R-S element. Residues 177 to 190 (GEEIAAETEAVAGV) are compositionally biased toward low complexity. 2 stretches are compositionally biased toward basic and acidic residues: residues 191-202 (ETEKDVGEKPAV) and 209-225 (ANKE…EDKE). The 56-residue stretch at 234-289 (ILEEKKKALQSLTTSERKVDTKVFESMQQLSNKKSNDEIFIKLGSDKDKRKDDKEE) folds into the FF domain. Ser268 bears the Phosphoserine mark. Residues 277–292 (GSDKDKRKDDKEEKAK) are compositionally biased toward basic and acidic residues. Positions 277–355 (GSDKDKRKDD…AAQFPSLGGK (79 aa)) are disordered. The span at 323 to 333 (GRGGVSSGESG) shows a compositional bias: gly residues. Phosphoserine is present on Ser351.

It belongs to the SERBP1-HABP4 family. In terms of tissue distribution, expressed in seedlings, leaves, roots, inflorescences, and siliques. Constitutively expressed in seedlings and roots.

The protein resides in the cytoplasm. Its subcellular location is the perinuclear region. It localises to the nucleus. In terms of biological role, ribosome-binding protein that acts as a regulator of mRNA translation by promoting ribosome inactivation. Binds RNA. Regulates responses to abscisic acid (ABA). Promotes stomata closure in drought conditions. Involved in resistance to salt and drought stresses via the accumulation of Pro. This Arabidopsis thaliana (Mouse-ear cress) protein is RGG repeats nuclear RNA binding protein A.